A 1865-amino-acid polypeptide reads, in one-letter code: Dedicator of cytokinesis protein 1 (1865 aa).

The 62-residue stretch at 9-70 (REEKYGVAFY…PASYIHLKEA (62 aa)) folds into the SH3 domain. The 185-residue stretch at 425 to 609 (RNDIYVTLVQ…DSFQISTLVC (185 aa)) folds into the C2 DOCK-type domain. A DOCKER domain is found at 1207–1617 (YKEIEREEMY…VEKQYGVRTM (411 aa)). The segment at 1613-1723 (GVRTMPSGLD…FKPADSSLQQ (111 aa)) is disordered. Residues 1639 to 1664 (PSSSRPLSVASVSSFSSDSTPSRPGS) show a composition bias toward low complexity. Residues 1680-1694 (RSQDKLDKDDPDKEK) show a composition bias toward basic and acidic residues. Serine 1681 carries the post-translational modification Phosphoserine. The phosphoinositide-binding stretch occupies residues 1687–1695 (KDDPDKEKK). Residues 1695–1704 (KDKKKEKRNS) show a composition bias toward basic residues. Residues 1705–1716 (KHQEIFDKEFKP) show a composition bias toward basic and acidic residues. Phosphoserine occurs at positions 1743, 1756, 1761, and 1764. Disordered stretches follow at residues 1753–1778 (RRFS…AKLS) and 1801–1865 (PLPL…GIVQ). The span at 1756-1766 (SVSPASPSSQQ) shows a compositional bias: low complexity. A phosphothreonine mark is found at threonine 1767 and threonine 1772. Residues 1793 to 1819 (MDVADVPPPLPLKGNMADYGNLMENQD) are interaction with NCK2 second and third SH3 domain (minor). The short motif at 1799-1805 (PPPLPLK) is the SH3-binding; interaction with CRK element. Positions 1820 to 1836 (MMVSPTSPPPPPPQRQQ) are interaction with NCK2 third SH3 domain (major). A compositionally biased stretch (pro residues) spans 1825–1851 (TSPPPPPPQRQQPPPLPSKTPPPPPPK). An interaction with NCK2 (minor) region spans residues 1837–1852 (PPPLPSKTPPPPPPKT). The SH3-binding; interaction with CRK signature appears at 1838–1843 (PPLPSK). Serine 1858 carries the phosphoserine modification.

Belongs to the DOCK family. In terms of assembly, interacts with the SH3 domains of CRK and NCK2 via multiple sites. Interacts with nucleotide-free RAC1 via its DOCKER domain. Interacts with ELMO1, ELMO2 and probably ELMO3 via its SH3 domain. Interacts with RAC1. Interacts with ELMO1 and ADGRB1. Identified in a complex with AUTS2 and ELMO2.

Its subcellular location is the cytoplasm. It is found in the membrane. Functionally, involved in cytoskeletal rearrangements required for phagocytosis of apoptotic cells and cell motility. Along with DOCK1, mediates CRK/CRKL regulation of epithelial and endothelial cell spreading and migration on type IV collagen. Functions as a guanine nucleotide exchange factor (GEF), which activates Rac Rho small GTPases by exchanging bound GDP for free GTP. Its GEF activity may be enhanced by ELMO1. The sequence is that of Dedicator of cytokinesis protein 1 (Dock1) from Mus musculus (Mouse).